The chain runs to 4540 residues: Dynein heavy chain, cytoplasmic (4540 aa).

Positions 1–1796 (MEESETQLNV…LIQMGNAQFH (1796 aa)) are stem. Coiled-coil stretches lie at residues 440–482 (EHIK…NVQQ), 698–722 (RVNYEKKLSQLFKEVRNLSNMKTKV), 794–827 (VKKFTDKVFELEQAVNGLNERIGQIESLCEAMKT), 975–995 (QQLIKDAYSQIGQLLEDMEQY), 1169–1251 (RSKK…LKMD), and 1295–1311 (QNKKIKDTCDEAQKQLN). 4 AAA regions span residues 1797–2018 (YGFE…VLNS), 2091–2348 (KELA…FTRI), 2457–2705 (EIDP…WKYA), and 2796–3056 (QFNE…AKRF). Residues 1835–1842 (GPAGTGKT), 2129–2136 (GPCGCGKS), 2496–2503 (GPPGSGKT), and 2834–2841 (GSSGVGKT) each bind ATP. 4 coiled-coil regions span residues 3076 to 3182 (NEKK…NAKQ), 3289 to 3367 (QLKY…RSQA), 3653 to 3688 (EDEKVIQTLEKLKKEAAVIVQEMKQADTIMNEVMNT), and 3820 to 3851 (QQLKQLEGITQQNQTFNRLIDNLNKNEDRWLN). The stalk stretch occupies residues 3076 to 3367 (NEKKSQLEDQ…VQEKVTRSQA (292 aa)). The segment at 3140 to 3159 (KKKEDSTRLSSDAEKKAKEM) is disordered. The AAA 5 stretch occupies residues 3444 to 3673 (LSRPSDRLNW…LKKEAAVIVQ (230 aa)). Residues 3908–4123 (ARKLINQILG…QRCSLDLIDE (216 aa)) are AAA 6. Coiled-coil stretches lie at residues 4238–4259 (QKLITKVQNLQQEGEEEITQIE) and 4313–4342 (RFLDREITVASKLLKAVRQNIEELIQLAQG).

It belongs to the dynein heavy chain family. Consists of at least two heavy chains and a number of intermediate and light chains.

Its subcellular location is the cytoplasm. It is found in the cytoskeleton. In terms of biological role, cytoplasmic dynein acts as a motor for the intracellular retrograde motility of vesicles and organelles along microtubules. Dynein has ATPase activity; the force-producing power stroke is thought to occur on release of ADP. This chain is Dynein heavy chain, cytoplasmic (DHC-8), found in Paramecium tetraurelia.